The following is a 297-amino-acid chain: Dehydrodolichyl diphosphate synthase complex subunit Nus1 (297 aa).

2 helical membrane passes run 7-26 and 40-56; these read LVWR…TSWL and CCRA…GFTL. Basic residues predominate over residues 63–73; that stretch reads GRNRRHHRHPH. The tract at residues 63–86 is disordered; the sequence is GRNRRHHRHPHGGPGPGPGPAATH. A helical membrane pass occupies residues 121–139; the sequence is IASLVVWCMAVGISYISVY. 2 N-linked (GlcNAc...) asparagine glycosylation sites follow: Asn-148 and Asn-275. The RXG motif; crucial for prenyltransferase activity motif lies at 294–296; it reads RLG. The isopentenyl diphosphate site is built by Leu-295 and Gly-296.

The protein belongs to the UPP synthase family. In terms of assembly, the active dehydrodolichyl diphosphate synthase complex is a heterotetramer composed of a dimer of heterodimer of DHDDS and NUS1. Interacts with NPC2. Mg(2+) serves as cofactor. As to expression, highly expressed in heart, liver, kidney and pancreas.

It localises to the endoplasmic reticulum membrane. It catalyses the reaction n isopentenyl diphosphate + (2E,6E)-farnesyl diphosphate = a di-trans,poly-cis-polyprenyl diphosphate + n diphosphate. The protein operates within protein modification; protein glycosylation. It functions in the pathway lipid metabolism. Its function is as follows. With DHDDS, forms the dehydrodolichyl diphosphate synthase (DDS) complex, an essential component of the dolichol monophosphate (Dol-P) biosynthetic machinery. Both subunits contribute to enzymatic activity, i.e. condensation of multiple copies of isopentenyl pyrophosphate (IPP) to farnesyl pyrophosphate (FPP) to produce dehydrodolichyl diphosphate (Dedol-PP), a precursor of dolichol phosphate which is utilized as a sugar carrier in protein glycosylation in the endoplasmic reticulum (ER). Synthesizes long-chain polyprenols, mostly of C95 and C100 chain length. Regulates the glycosylation and stability of nascent NPC2, thereby promoting trafficking of LDL-derived cholesterol. Acts as a specific receptor for the N-terminus of Nogo-B, a neural and cardiovascular regulator. The chain is Dehydrodolichyl diphosphate synthase complex subunit Nus1 from Mus musculus (Mouse).